A 262-amino-acid chain; its full sequence is Small ribosomal subunit protein mS23 (262 aa).

Residues 242 to 254 are compositionally biased toward acidic residues; sequence AAEEQETSLDDDA. A disordered region spans residues 242–262; it reads AAEEQETSLDDDATEKVAVAA.

Belongs to the mitochondrion-specific ribosomal protein mS23 family. In terms of assembly, component of the mitochondrial small ribosomal subunit.

The protein localises to the mitochondrion. This is Small ribosomal subunit protein mS23 (rsm25) from Aspergillus niger (strain ATCC MYA-4892 / CBS 513.88 / FGSC A1513).